The sequence spans 167 residues: UPF0254 protein MJ1251 (167 aa).

It belongs to the UPF0254 family.

The protein is UPF0254 protein MJ1251 of Methanocaldococcus jannaschii (strain ATCC 43067 / DSM 2661 / JAL-1 / JCM 10045 / NBRC 100440) (Methanococcus jannaschii).